A 410-amino-acid polypeptide reads, in one-letter code: uncharacterized protein (410 aa).

The next 11 helical transmembrane spans lie at 14-34 (IIIG…FLAI), 48-68 (GLVI…GGYI), 82-102 (IFGW…WVFF), 140-160 (YAAI…FGSS), 164-184 (TPFL…ALQF), 212-232 (YLFT…SQFS), 251-271 (LYGL…FPIV), 279-299 (PLCS…IFTV), 303-323 (VPSI…LFSM), 342-362 (GAIG…GICI), and 371-391 (IYIF…LAFA).

Belongs to the major facilitator superfamily. TCR/Tet family.

The protein resides in the cell membrane. This is an uncharacterized protein from Bacillus subtilis (strain 168).